A 20-amino-acid chain; its full sequence is Fibrinogen beta chain (20 aa).

Tyr-5 is subject to Sulfotyrosine.

In terms of assembly, heterohexamer; disulfide linked. Contains 2 sets of 3 non-identical chains (alpha, beta and gamma). The 2 heterotrimers are in head to head conformation with the N-termini in a small central domain. Post-translationally, conversion of fibrinogen to fibrin is triggered by thrombin, which cleaves fibrinopeptides A and B from alpha and beta chains, and thus exposes the N-terminal polymerization sites responsible for the formation of the soft clot.

It is found in the secreted. Cleaved by the protease thrombin to yield monomers which, together with fibrinogen alpha (FGA) and fibrinogen gamma (FGG), polymerize to form an insoluble fibrin matrix. Fibrin has a major function in hemostasis as one of the primary components of blood clots. In addition, functions during the early stages of wound repair to stabilize the lesion and guide cell migration during re-epithelialization. Was originally thought to be essential for platelet aggregation, based on in vitro studies using anticoagulated blood. However subsequent studies have shown that it is not absolutely required for thrombus formation in vivo. Enhances expression of SELP in activated platelets. Maternal fibrinogen is essential for successful pregnancy. Fibrin deposition is also associated with infection, where it protects against IFNG-mediated hemorrhage. May also facilitate the antibacterial immune response via both innate and T-cell mediated pathways. The protein is Fibrinogen beta chain (FGB) of Capra hircus (Goat).